The chain runs to 138 residues: Glutathione S-transferase Mu 5 (138 aa).

Residue Ser1 is modified to Phosphoserine. In terms of domain architecture, GST N-terminal spans 1–71 (SMVLGYWDIR…KITQSNAILR (71 aa)). Glutathione contacts are provided by residues 6 to 7 (YW), 39 to 43 (WLDVK), 52 to 53 (NL), and 65 to 66 (QS). The 64-residue stretch at 72–135 (IRVDIMENQI…FMCRCFKMPI (64 aa)) folds into the GST C-terminal domain.

This sequence belongs to the GST superfamily. Mu family. Homodimer.

The protein localises to the cytoplasm. The catalysed reaction is RX + glutathione = an S-substituted glutathione + a halide anion + H(+). Conjugation of reduced glutathione to a wide number of exogenous and endogenous hydrophobic electrophiles. The sequence is that of Glutathione S-transferase Mu 5 from Mesocricetus auratus (Golden hamster).